Here is a 460-residue protein sequence, read N- to C-terminus: Argininosuccinate lyase (460 aa).

Belongs to the lyase 1 family. Argininosuccinate lyase subfamily.

It is found in the cytoplasm. It catalyses the reaction 2-(N(omega)-L-arginino)succinate = fumarate + L-arginine. Its pathway is amino-acid biosynthesis; L-arginine biosynthesis; L-arginine from L-ornithine and carbamoyl phosphate: step 3/3. This Pelotomaculum thermopropionicum (strain DSM 13744 / JCM 10971 / SI) protein is Argininosuccinate lyase.